Reading from the N-terminus, the 375-residue chain is MAKLRVGIIFGGQSAEHEVSLQSAKNIVETIDENKFEVVLFGIDKEGQWHINNKLNYLIYGENETYIALNKSNKHIAIIPGRKHDQFIQIDMLEQLVQLDVIFPIVHGTLGEDGNLQGLLRMANLPFVGSTVLGSAVSMDKDIAKRLLRDADLEVTPSITLTRINRENFSYDQIITYLGSSLFVKPANQGSSVGVSKVINRISFDQALALAFCFDDKVLVESAINGRELECAVLGNHDPQASLCGEIVLSDNFYSYEKKYLNEHGAVVVVPAAISKEVSNNIQKIAVRAFQALNCTGMARVDVFLTTNNKVLVNEVNTSPGFTSISMYPKLWQASGISYPALITRLIELAIERYYAEQKKISHRDIYNKIDTGSA.

The 204-residue stretch at 145 to 348 folds into the ATP-grasp domain; that stretch reads KRLLRDADLE…YPALITRLIE (204 aa). 175–230 contributes to the ATP binding site; the sequence is ITYLGSSLFVKPANQGSSVGVSKVINRISFDQALALAFCFDDKVLVESAINGRELE. 3 residues coordinate Mg(2+): Asp302, Glu315, and Asn317.

This sequence belongs to the D-alanine--D-alanine ligase family. Requires Mg(2+) as cofactor. Mn(2+) is required as a cofactor.

The protein resides in the cytoplasm. It catalyses the reaction 2 D-alanine + ATP = D-alanyl-D-alanine + ADP + phosphate + H(+). The protein operates within cell wall biogenesis; peptidoglycan biosynthesis. Functionally, cell wall formation. This chain is D-alanine--D-alanine ligase, found in Baumannia cicadellinicola subsp. Homalodisca coagulata.